We begin with the raw amino-acid sequence, 502 residues long: ATP synthase subunit alpha (502 aa).

Residues 117-139 (GMGPVLTSKTRPIESPAPGVMDR) form a disordered region. 169 to 176 (GDRQTGKT) provides a ligand contact to ATP.

The protein belongs to the ATPase alpha/beta chains family. F-type ATPases have 2 components, CF(1) - the catalytic core - and CF(0) - the membrane proton channel. CF(1) has five subunits: alpha(3), beta(3), gamma(1), delta(1), epsilon(1). CF(0) has three main subunits: a(1), b(2) and c(9-12). The alpha and beta chains form an alternating ring which encloses part of the gamma chain. CF(1) is attached to CF(0) by a central stalk formed by the gamma and epsilon chains, while a peripheral stalk is formed by the delta and b chains.

The protein localises to the cell membrane. The enzyme catalyses ATP + H2O + 4 H(+)(in) = ADP + phosphate + 5 H(+)(out). Produces ATP from ADP in the presence of a proton gradient across the membrane. The alpha chain is a regulatory subunit. The chain is ATP synthase subunit alpha from Bacillus licheniformis (strain ATCC 14580 / DSM 13 / JCM 2505 / CCUG 7422 / NBRC 12200 / NCIMB 9375 / NCTC 10341 / NRRL NRS-1264 / Gibson 46).